Reading from the N-terminus, the 674-residue chain is Xaa-Pro aminopeptidase 2 (674 aa).

Residues 1 to 22 form the signal peptide; the sequence is MAQAYWQCYPWLVLLCACAWSY. Asn-65 is a glycosylation site (N-linked (GlcNAc...) asparagine). Arg-116 is a binding site for substrate. Residues Asn-270, Asn-278, and Asn-293 are each glycosylated (N-linked (GlcNAc...) asparagine). A substrate-binding site is contributed by His-430. Zn(2+)-binding residues include Asp-450, Asp-461, and His-524. His-524, His-533, and Glu-555 together coordinate substrate. Residues Glu-555 and Glu-569 each coordinate Zn(2+). The GPI-anchor amidated alanine moiety is linked to residue Ala-650. A propeptide spans 651–674 (removed in mature form); the sequence is RAPHIISWTSLWVASALAILSWSS.

This sequence belongs to the peptidase M24B family. As to quaternary structure, homotrimer. The cofactor is Zn(2+). N-glycosylated. In terms of tissue distribution, strongly expressed in small intestine, heart and lung. Also detected in testis, skeletal muscle, spleen, liver, kidney, brain, uterus, eye, lymph node, thymus, stomach, prostate and bone marrow.

It is found in the cell membrane. It carries out the reaction Release of any N-terminal amino acid, including proline, that is linked to proline, even from a dipeptide or tripeptide.. Membrane-bound metalloprotease which catalyzes the removal of a penultimate prolyl residue from the N-termini of peptides, such as Arg-Pro-Pro. May play a role in the metabolism of the vasodilator bradykinin. This Mus musculus (Mouse) protein is Xaa-Pro aminopeptidase 2.